The chain runs to 249 residues: 3-deoxy-manno-octulosonate cytidylyltransferase (249 aa).

Belongs to the KdsB family.

It localises to the cytoplasm. The enzyme catalyses 3-deoxy-alpha-D-manno-oct-2-ulosonate + CTP = CMP-3-deoxy-beta-D-manno-octulosonate + diphosphate. It functions in the pathway nucleotide-sugar biosynthesis; CMP-3-deoxy-D-manno-octulosonate biosynthesis; CMP-3-deoxy-D-manno-octulosonate from 3-deoxy-D-manno-octulosonate and CTP: step 1/1. It participates in bacterial outer membrane biogenesis; lipopolysaccharide biosynthesis. Its function is as follows. Activates KDO (a required 8-carbon sugar) for incorporation into bacterial lipopolysaccharide in Gram-negative bacteria. The sequence is that of 3-deoxy-manno-octulosonate cytidylyltransferase from Photorhabdus laumondii subsp. laumondii (strain DSM 15139 / CIP 105565 / TT01) (Photorhabdus luminescens subsp. laumondii).